The sequence spans 285 residues: Shikimate dehydrogenase (NADP(+)) (285 aa).

Shikimate-binding positions include 20–22 (SIS) and Ser-67. Lys-71 functions as the Proton acceptor in the catalytic mechanism. Residues Asn-92 and Asp-107 each coordinate shikimate. Residues 129-133 (GAGGA) and Ile-227 each bind NADP(+). Residue Tyr-229 participates in shikimate binding. Gly-250 contacts NADP(+).

Belongs to the shikimate dehydrogenase family. As to quaternary structure, homodimer.

It catalyses the reaction shikimate + NADP(+) = 3-dehydroshikimate + NADPH + H(+). It functions in the pathway metabolic intermediate biosynthesis; chorismate biosynthesis; chorismate from D-erythrose 4-phosphate and phosphoenolpyruvate: step 4/7. Functionally, involved in the biosynthesis of the chorismate, which leads to the biosynthesis of aromatic amino acids. Catalyzes the reversible NADPH linked reduction of 3-dehydroshikimate (DHSA) to yield shikimate (SA). The polypeptide is Shikimate dehydrogenase (NADP(+)) (Streptococcus thermophilus (strain ATCC BAA-491 / LMD-9)).